Consider the following 544-residue polypeptide: D-2-hydroxyglutarate dehydrogenase, mitochondrial (544 aa).

The N-terminal 10 residues, M1 to W10, are a transit peptide targeting the mitochondrion. In terms of domain architecture, FAD-binding PCMH-type spans V119–K298. Residue K124 is modified to N6-succinyllysine. Residues R409, T413, and K424 each contribute to the (R)-2-hydroxyglutarate site. Residue R409 participates in (R)-lactate binding. (R)-malate contacts are provided by R409, T413, and K424. Zn(2+) contacts are provided by H457 and H464. N466 provides a ligand contact to (R)-2-hydroxyglutarate. E498 is a binding site for Zn(2+). H499 contributes to the (R)-2-hydroxyglutarate binding site. (R)-lactate is bound at residue H499. Position 499 (H499) interacts with (R)-malate.

This sequence belongs to the FAD-binding oxidoreductase/transferase type 4 family. The cofactor is FAD.

It is found in the mitochondrion. It catalyses the reaction (R)-2-hydroxyglutarate + A = 2-oxoglutarate + AH2. The enzyme catalyses (R)-malate + A = oxaloacetate + AH2. Activated by zinc and cobalt ions. In terms of biological role, catalyzes the oxidation of D-2-hydroxyglutarate (D-2-HG) to alpha-ketoglutarate. Also catalyzes the oxidation of other D-2-hydroxyacids, such as D-malate (D-MAL) and D-lactate (D-LAC). Exhibits high activities towards D-2-HG and D-MAL but a very weak activity towards D-LAC. This is D-2-hydroxyglutarate dehydrogenase, mitochondrial (D2HGDH) from Bos taurus (Bovine).